Here is a 339-residue protein sequence, read N- to C-terminus: Vomeronasal type-1 receptor A14 (339 aa).

The Extracellular segment spans residues 1–42 (MMGVQICQGMMSEIPFFSPPPQFSYMMNKNIRLHTDSNIRNT). The chain crosses the membrane as a helical span at residues 43-63 (FFTDIGIGISANSLLLLFNIF). The Cytoplasmic portion of the chain corresponds to 64–75 (KLTRGQRSRLTD). The chain crosses the membrane as a helical span at residues 76-96 (LPIGLLSLINLLMLLMAAFIA). Residues 97 to 119 (TDTFISWKGWDDIICKFLVYLYR) are Extracellular-facing. An intrachain disulfide couples Cys111 to Cys198. The chain crosses the membrane as a helical span at residues 120-140 (TFRGLSLCTSCLLSVLQAIIL). Residues 141–160 (SPRSSCLAKFKHKPPHHISC) are Cytoplasmic-facing. A helical transmembrane segment spans residues 161–181 (AILSLSVLYMFIGSHLLVSII). Residues 182-213 (ATPNLTTNDFIHVTQSCSILPMSYLMQCMFST) lie on the Extracellular side of the membrane. N-linked (GlcNAc...) asparagine glycosylation is present at Asn185. Residues 214–234 (LLAIRDVFLISLMVLSTWYMV) traverse the membrane as a helical segment. Topologically, residues 235-264 (ALLCRHRKQTRHLQGTSLSPKASPEQRATR) are cytoplasmic. Residues 265-285 (SILMLMSLFVLMSVFDSIVCS) traverse the membrane as a helical segment. Topologically, residues 286-296 (SRTMYLNDPIS) are extracellular. A helical membrane pass occupies residues 297–317 (YSIQLFMVHIYATVSPFVFIV). The Cytoplasmic segment spans residues 318 to 339 (TEKHIVNFLRSVCEGDECLNIH).

The protein belongs to the G-protein coupled receptor 1 family.

It localises to the cell membrane. Functionally, putative pheromone receptor implicated in the regulation of social as well as reproductive behavior. This chain is Vomeronasal type-1 receptor A14, found in Rattus norvegicus (Rat).